The sequence spans 136 residues: Protein PsiE homolog (136 aa).

Transmembrane regions (helical) follow at residues 15–35, 55–75, 82–102, and 108–128; these read ILQTVLNMGLLSLGLILVVFL, YELVEGLVVYFLYFEFIALIV, FHFPLRYFVYIGITAIVRLII, and PLDVLIYSAAILLLVITLWLC.

This sequence belongs to the PsiE family.

The protein localises to the cell inner membrane. This is Protein PsiE homolog from Enterobacter sp. (strain 638).